Reading from the N-terminus, the 375-residue chain is Digeranylgeranylglycerophospholipid reductase 1 (375 aa).

Residues Ala13, Glu32, Cys43, Ala44, Gly46, Arg92, Ala116, Asp275, Gly287, and Leu288 each contribute to the FAD site. Residue Gly367 coordinates a 2,3-bis-O-(geranylgeranyl)-sn-glycerol 1-phospholipid.

Belongs to the geranylgeranyl reductase family. DGGGPL reductase subfamily. It depends on FAD as a cofactor.

It carries out the reaction a 2,3-bis-O-phytanyl-sn-glycerol 1-phospholipid + 8 A = a 2,3-bis-O-(geranylgeranyl)-sn-glycerol 1-phospholipid + 8 AH2. It catalyses the reaction 2,3-bis-O-(phytanyl)-sn-glycerol 1-phosphate + 8 A = 2,3-bis-O-(geranylgeranyl)-sn-glycerol 1-phosphate + 8 AH2. The catalysed reaction is CDP-2,3-bis-O-(geranylgeranyl)-sn-glycerol + 8 AH2 = CDP-2,3-bis-O-(phytanyl)-sn-glycerol + 8 A. The enzyme catalyses archaetidylserine + 8 AH2 = 2,3-bis-O-phytanyl-sn-glycero-3-phospho-L-serine + 8 A. It participates in membrane lipid metabolism; glycerophospholipid metabolism. In terms of biological role, is involved in the reduction of 2,3-digeranylgeranylglycerophospholipids (unsaturated archaeols) into 2,3-diphytanylglycerophospholipids (saturated archaeols) in the biosynthesis of archaeal membrane lipids. Catalyzes the formation of archaetidic acid (2,3-di-O-phytanyl-sn-glyceryl phosphate) from 2,3-di-O-geranylgeranylglyceryl phosphate (DGGGP) via the hydrogenation of each double bond of the isoprenoid chains. Is also probably able to reduce double bonds of geranyl groups in CDP-2,3-bis-O-(geranylgeranyl)-sn-glycerol and archaetidylserine, thus acting at various stages in the biosynthesis of archaeal membrane lipids. The protein is Digeranylgeranylglycerophospholipid reductase 1 of Methanopyrus kandleri (strain AV19 / DSM 6324 / JCM 9639 / NBRC 100938).